Consider the following 528-residue polypeptide: ATP synthase subunit beta 2 (528 aa).

The segment covering 1-10 has biased composition (polar residues); it reads MADPQATNGT. The interval 1–27 is disordered; it reads MADPQATNGTGAACAERDASDVGDARD. Over residues 15 to 27 the composition is skewed to basic and acidic residues; sequence AERDASDVGDARD. 179–186 contributes to the ATP binding site; that stretch reads GGAGVGKT. Over residues 488–499 the composition is skewed to basic and acidic residues; the sequence is AAAREADARREA. The disordered stretch occupies residues 488–528; that stretch reads AAAREADARREAAAAASGAGPGTTSDPASGSAEPQGARHGR.

Belongs to the ATPase alpha/beta chains family. As to quaternary structure, F-type ATPases have 2 components, CF(1) - the catalytic core - and CF(0) - the membrane proton channel. CF(1) has five subunits: alpha(3), beta(3), gamma(1), delta(1), epsilon(1). CF(0) has three main subunits: a(1), b(2) and c(9-12). The alpha and beta chains form an alternating ring which encloses part of the gamma chain. CF(1) is attached to CF(0) by a central stalk formed by the gamma and epsilon chains, while a peripheral stalk is formed by the delta and b chains.

The protein localises to the cell inner membrane. It carries out the reaction ATP + H2O + 4 H(+)(in) = ADP + phosphate + 5 H(+)(out). Functionally, produces ATP from ADP in the presence of a proton gradient across the membrane. The catalytic sites are hosted primarily by the beta subunits. The sequence is that of ATP synthase subunit beta 2 from Burkholderia pseudomallei (strain 1106a).